A 103-amino-acid polypeptide reads, in one-letter code: ATP synthase F(0) complex subunit g, mitochondrial (103 aa).

N-acetylalanine is present on alanine 2. Residues lysine 11, lysine 24, lysine 35, and lysine 54 each carry the N6-acetyllysine modification.

This sequence belongs to the ATPase g subunit family. As to quaternary structure, component of the ATP synthase complex composed at least of ATP5F1A/subunit alpha, ATP5F1B/subunit beta, ATP5MC1/subunit c (homooctomer), MT-ATP6/subunit a, MT-ATP8/subunit 8, ATP5ME/subunit e, ATP5MF/subunit f, ATP5MG/subunit g, ATP5MK/subunit k, ATP5MJ/subunit j, ATP5F1C/subunit gamma, ATP5F1D/subunit delta, ATP5F1E/subunit epsilon, ATP5PF/subunit F6, ATP5PB/subunit b, ATP5PD/subunit d, ATP5PO/subunit OSCP. ATP synthase complex consists of a soluble F(1) head domain (subunits alpha(3) and beta(3)) - the catalytic core - and a membrane F(0) domain - the membrane proton channel (subunits c, a, 8, e, f, g, k and j). These two domains are linked by a central stalk (subunits gamma, delta, and epsilon) rotating inside the F1 region and a stationary peripheral stalk (subunits F6, b, d, and OSCP).

Its subcellular location is the mitochondrion. It localises to the mitochondrion inner membrane. Subunit g, of the mitochondrial membrane ATP synthase complex (F(1)F(0) ATP synthase or Complex V) that produces ATP from ADP in the presence of a proton gradient across the membrane which is generated by electron transport complexes of the respiratory chain. ATP synthase complex consist of a soluble F(1) head domain - the catalytic core - and a membrane F(1) domain - the membrane proton channel. These two domains are linked by a central stalk rotating inside the F(1) region and a stationary peripheral stalk. During catalysis, ATP synthesis in the catalytic domain of F(1) is coupled via a rotary mechanism of the central stalk subunits to proton translocation. In vivo, can only synthesize ATP although its ATP hydrolase activity can be activated artificially in vitro. Part of the complex F(0) domain. The sequence is that of ATP synthase F(0) complex subunit g, mitochondrial from Pongo abelii (Sumatran orangutan).